Reading from the N-terminus, the 150-residue chain is Arginine repressor (150 aa).

Belongs to the ArgR family.

The protein resides in the cytoplasm. The protein operates within amino-acid biosynthesis; L-arginine biosynthesis [regulation]. Regulates arginine biosynthesis genes. This chain is Arginine repressor, found in Thermoanaerobacter sp. (strain X514).